Here is a 205-residue protein sequence, read N- to C-terminus: Guanylate kinase (205 aa).

One can recognise a Guanylate kinase-like domain in the interval G5 to E183. An ATP-binding site is contributed by G12–G19.

Belongs to the guanylate kinase family.

Its subcellular location is the cytoplasm. It catalyses the reaction GMP + ATP = GDP + ADP. In terms of biological role, essential for recycling GMP and indirectly, cGMP. The protein is Guanylate kinase (gmk) of Lactococcus lactis subsp. lactis (strain IL1403) (Streptococcus lactis).